The chain runs to 525 residues: ADP-ribosylation factor GTPase-activating protein 3 (525 aa).

Residues Leu-10–Arg-126 enclose the Arf-GAP domain. The C4-type zinc finger occupies Cys-25–Cys-48. Residues Val-160–Leu-233 are disordered. Residues Gly-162–Pro-177 show a composition bias toward polar residues. Residues Ala-222–Leu-233 are compositionally biased toward low complexity. A phosphoserine mark is found at Ser-232, Ser-242, Ser-271, and Ser-275. The tract at residues Gln-249–Ser-271 is disordered. The span at Leu-293–Arg-305 shows a compositional bias: basic and acidic residues. 2 disordered regions span residues Leu-293–Arg-364 and Phe-377–Lys-428. The segment covering His-319–Pro-333 has biased composition (polar residues). Ser-332 is modified (phosphoserine). Positions Ser-349–Ser-363 are enriched in low complexity. Residue Ser-379 is modified to Phosphoserine. The span at Tyr-387–Pro-398 shows a compositional bias: basic and acidic residues. 6 positions are modified to phosphoserine: Ser-437, Ser-460, Ser-462, Ser-464, Ser-466, and Ser-467.

The protein localises to the cytoplasm. Its subcellular location is the golgi apparatus membrane. GAP activity stimulated by phosphatidylinositol 4,5-bisphosphate (PIP2). Functionally, GTPase-activating protein (GAP) for ADP ribosylation factor 1 (ARF1). Hydrolysis of ARF1-bound GTP may lead to dissociation of coatomer from Golgi-derived membranes to allow fusion with target membranes. The polypeptide is ADP-ribosylation factor GTPase-activating protein 3 (Rattus norvegicus (Rat)).